Reading from the N-terminus, the 257-residue chain is 6-phosphogluconolactonase (257 aa).

Alanine 2 carries the N-acetylalanine modification. Serine 49 is modified (phosphoserine). At lysine 180 the chain carries N6-acetyllysine.

Belongs to the glucosamine/galactosamine-6-phosphate isomerase family. 6-phosphogluconolactonase subfamily.

Its subcellular location is the cytoplasm. It carries out the reaction 6-phospho-D-glucono-1,5-lactone + H2O = 6-phospho-D-gluconate + H(+). Its pathway is carbohydrate degradation; pentose phosphate pathway; D-ribulose 5-phosphate from D-glucose 6-phosphate (oxidative stage): step 2/3. Hydrolysis of 6-phosphogluconolactone to 6-phosphogluconate. The protein is 6-phosphogluconolactonase of Rattus norvegicus (Rat).